Reading from the N-terminus, the 121-residue chain is Large ribosomal subunit protein bL12 (121 aa).

The protein belongs to the bacterial ribosomal protein bL12 family. As to quaternary structure, homodimer. Part of the ribosomal stalk of the 50S ribosomal subunit. Forms a multimeric L10(L12)X complex, where L10 forms an elongated spine to which 2 to 4 L12 dimers bind in a sequential fashion. Binds GTP-bound translation factors.

Forms part of the ribosomal stalk which helps the ribosome interact with GTP-bound translation factors. Is thus essential for accurate translation. The sequence is that of Large ribosomal subunit protein bL12 from Aeromonas hydrophila subsp. hydrophila (strain ATCC 7966 / DSM 30187 / BCRC 13018 / CCUG 14551 / JCM 1027 / KCTC 2358 / NCIMB 9240 / NCTC 8049).